The sequence spans 117 residues: Large ribosomal subunit protein bL19 (117 aa).

The protein belongs to the bacterial ribosomal protein bL19 family.

Its function is as follows. This protein is located at the 30S-50S ribosomal subunit interface and may play a role in the structure and function of the aminoacyl-tRNA binding site. In Vibrio parahaemolyticus serotype O3:K6 (strain RIMD 2210633), this protein is Large ribosomal subunit protein bL19.